The following is a 5386-amino-acid chain: Nonribosomal peptide synthetase 2 (5386 aa).

Positions 45-435 (HDANAIDFLE…QGLLECLGRV (391 aa)) are adenylation 1. Residues 544–617 (SPKDPIGHSV…DLIEVCRESK (74 aa)) enclose the Carrier 1 domain. Residue S578 is modified to O-(pantetheine 4'-phosphoryl)serine. The tract at residues 652-1059 (LPCTPLQEAM…VDADRHVSAI (408 aa)) is condensation 1. Residues 1089-1482 (EKWAATDPHR…GRTDDQVKIR (394 aa)) are adenylation 2. In terms of domain architecture, Carrier 2 spans 1611–1688 (ELLSQWERDV…SLASLKKLQS (78 aa)). Position 1648 is an O-(pantetheine 4'-phosphoryl)serine (S1648). Residues 1731–2141 (ILPCTPLQEA…ALSADTDMFP (411 aa)) form a condensation 2 region. Residues 2166–2551 (FERTALLHPD…GRLDDQVKIR (386 aa)) are adenylation 3. The 74-residue stretch at 2652-2725 (SKTESEVRNI…DLAEHLDQIS (74 aa)) folds into the Carrier 3 domain. Position 2686 is an O-(pantetheine 4'-phosphoryl)serine (S2686). The tract at residues 2763 to 3174 (RPCTPLQNGM…HSQIPLAKTD (412 aa)) is condensation 3. The adenylation 4 stretch occupies residues 3202 to 3603 (EKTAQEHPQR…GRADDQVKLR (402 aa)). Residues 3728 to 3805 (EQWSKQEEKL…RLAKSLAANS (78 aa)) enclose the Carrier 4 domain. S3765 is subject to O-(pantetheine 4'-phosphoryl)serine. Residues 3846 to 4250 (LAPCTPLQQG…LDQAINDPSA (405 aa)) are condensation 4. In terms of domain architecture, Carrier 5 spans 4281-4357 (FEWSDNAIAI…KMAQNMSMKN (77 aa)). O-(pantetheine 4'-phosphoryl)serine is present on S4318. A condensation 5 region spans residues 4391-4802 (EEILPLTPLQ…ERAEAPVIDM (412 aa)). Residues 4821 to 4842 (HTGSGHVESGEDDGQDTPSTET) are disordered. One can recognise a Carrier 6 domain in the interval 4840-4913 (TETTNRIRKI…KMAKLADARA (74 aa)). Residue S4874 is modified to O-(pantetheine 4'-phosphoryl)serine. A condensation 6 region spans residues 4952-5257 (QMLPVTAGQL…VQAHLRHLND (306 aa)).

It belongs to the NRP synthetase family.

Its pathway is siderophore biosynthesis. In terms of biological role, nonribosomal peptide synthetase; part of the gene cluster that mediates the biosynthesis of hydroxamate-containing siderophores that play a critical role in virulence. Cochliobolus heterostrophus produces extracellular coprogen-type siderophores including coprogen, neocoprogen I and neocoprogen II, as well as the intracellular siderophore ferricrocin. The role of extracellular siderophores is to supply iron to the fungus during plant infection, and the intracellular ferricrocin is required for intracellular iron distribution and storage with a crucial role in ascus and ascospore development. SIDA2 catalyzes the conversion of L-ornithine to N(5)-hydroxyornithine, the first step in the biosynthesis of all hydroxamate-containing siderophores. The assembly of extracellular coprogen-type siderophores is then performed by the nonribosomal peptide synthetase (NRPS) NPS6 whereas the intracellular siderophore ferricrocin is assembled by NPS2. This is Nonribosomal peptide synthetase 2 from Cochliobolus heterostrophus (strain C4 / ATCC 48331 / race T) (Southern corn leaf blight fungus).